Here is a 216-residue protein sequence, read N- to C-terminus: Probable Golgi SNAP receptor complex member 2 (216 aa).

The Cytoplasmic segment spans residues 1 to 194 (MESLYHQTNN…IERRLVEDRR (194 aa)). Residues 62–103 (QRQSSKLRVDQLKYDLRHLQTSLQTARERRQRRMQEISEREQ) are a coiled coil. The chain crosses the membrane as a helical; Anchor for type IV membrane protein span at residues 195 to 215 (IFIGGVVVTLLIIALIIYFLV). A topological domain (vesicular) is located at residue Leu-216.

The protein belongs to the GOSR2 family. In terms of assembly, part of a unique SNARE complex.

It localises to the golgi apparatus. It is found in the cis-Golgi network membrane. Its subcellular location is the golgi apparatus membrane. The protein resides in the endoplasmic reticulum membrane. Involved in transport of proteins from the cis/medial-Golgi to the trans-Golgi network. The chain is Probable Golgi SNAP receptor complex member 2 from Drosophila melanogaster (Fruit fly).